The primary structure comprises 466 residues: Glucose-6-phosphate 1-dehydrogenase 1 (466 aa).

NADP(+) contacts are provided by residues Ser-48, 88–89 (DV), and Lys-141. Substrate contacts are provided by His-171, Lys-175, Glu-209, and Asp-228. Catalysis depends on His-233, which acts as the Proton acceptor. The substrate site is built by Lys-319 and Lys-324.

Belongs to the glucose-6-phosphate dehydrogenase family.

It carries out the reaction D-glucose 6-phosphate + NADP(+) = 6-phospho-D-glucono-1,5-lactone + NADPH + H(+). It functions in the pathway carbohydrate degradation; pentose phosphate pathway; D-ribulose 5-phosphate from D-glucose 6-phosphate (oxidative stage): step 1/3. Functionally, catalyzes the oxidation of glucose 6-phosphate to 6-phosphogluconolactone. The sequence is that of Glucose-6-phosphate 1-dehydrogenase 1 from Mycobacterium tuberculosis (strain ATCC 25618 / H37Rv).